A 586-amino-acid chain; its full sequence is Assimilatory ferredoxin-dependent nitrite reductase (586 aa).

Residues Cys411, Cys417, Cys455, and Cys459 each contribute to the [4Fe-4S] cluster site. Cys459 is a binding site for siroheme. The tract at residues 566 to 586 (SWYPFADEDEPPKTEQPMTSD) is disordered.

The protein belongs to the nitrite and sulfite reductase 4Fe-4S domain family. As to quaternary structure, monomer. Siroheme is required as a cofactor. Requires [4Fe-4S] cluster as cofactor.

The enzyme catalyses 6 oxidized [2Fe-2S]-[ferredoxin] + NH4(+) + 2 H2O = nitrite + 6 reduced [2Fe-2S]-[ferredoxin] + 8 H(+). The protein operates within nitrogen metabolism; nitrate reduction (assimilation). With respect to regulation, inhibited by cyanide and azide. Its function is as follows. Catalyzes the reduction of nitrite to ammonium in the nitrate assimilation pathway, using ferredoxin as the electron donor. Can use reduced methyl viologen but neither NADPH nor NADH as electron donors. This is Assimilatory ferredoxin-dependent nitrite reductase from Haloferax mediterranei (strain ATCC 33500 / DSM 1411 / JCM 8866 / NBRC 14739 / NCIMB 2177 / R-4) (Halobacterium mediterranei).